Here is a 73-residue protein sequence, read N- to C-terminus: MATEKSVTPTEEQLEILEYNFCKVNKHPDPTTLCLIAAETGLSEEQTLKWFKQRLAEWRKSEGLPSECGSVRD.

The segment at residues 3–62 is a DNA-binding region (homeobox; degenerate); that stretch reads TEKSVTPTEEQLEILEYNFCKVNKHPDPTTLCLIAAETGLSEEQTLKWFKQRLAEWRKSE.

It is found in the nucleus. Its subcellular location is the cytoplasm. Functionally, atypical homeodomain protein which does not bind DNA and is required to modulate cardiac growth and development. May act via an interaction with SRF, leading to modulate the expression of SRF-dependent cardiac-specific genes and cardiac development. May act as a co-chaperone for HSPA1A and HSPA1B chaperone proteins and assist in chaperone-mediated protein refolding. The polypeptide is Homeodomain-only protein (HOPX) (Gallus gallus (Chicken)).